We begin with the raw amino-acid sequence, 316 residues long: uncharacterized protein (316 aa).

To yeast YGR277c.

This is an uncharacterized protein from Schizosaccharomyces pombe (strain 972 / ATCC 24843) (Fission yeast).